Here is a 431-residue protein sequence, read N- to C-terminus: Glutamate--tRNA ligase 1 (431 aa).

The 'HIGH' region signature appears at 6-16 (PSPTGDMHIGN). Positions 235-239 (KMSKR) match the 'KMSKS' region motif. ATP is bound at residue lysine 238.

The protein belongs to the class-I aminoacyl-tRNA synthetase family. Glutamate--tRNA ligase type 1 subfamily. Monomer.

The protein resides in the cytoplasm. The enzyme catalyses tRNA(Glu) + L-glutamate + ATP = L-glutamyl-tRNA(Glu) + AMP + diphosphate. In terms of biological role, catalyzes the attachment of glutamate to tRNA(Glu) in a two-step reaction: glutamate is first activated by ATP to form Glu-AMP and then transferred to the acceptor end of tRNA(Glu). This is Glutamate--tRNA ligase 1 from Campylobacter jejuni (strain RM1221).